A 194-amino-acid chain; its full sequence is MPQHTELVVLLDDDGETIGTAPKATVHTRDTALHLAFSCHVFDAQGRILVTRRAIGKLTWPGVWTNSFCGHPAPDEDMREAVHRRAEQELGLELESVELVLPDFRYRATDAAGVVENEICPVFRAVAASPVDPRPEEVGEYQWVDPEQLIPAVAHTPWAFSPWLTLQLPLLYPEHAAHSGLAETAAAAAAVPAA.

Mn(2+) is bound by residues His27 and His34. The 135-residue stretch at 32-166 (ALHLAFSCHV…PWAFSPWLTL (135 aa)) folds into the Nudix hydrolase domain. Cys69 is a catalytic residue. Residue His71 coordinates Mn(2+). Residue Glu89 coordinates Mg(2+). Mn(2+) contacts are provided by Glu116 and Glu118. Glu118 is a catalytic residue.

This sequence belongs to the IPP isomerase type 1 family. It depends on Mg(2+) as a cofactor. Mn(2+) serves as cofactor.

The protein resides in the cytoplasm. It carries out the reaction isopentenyl diphosphate = dimethylallyl diphosphate. It functions in the pathway isoprenoid biosynthesis; dimethylallyl diphosphate biosynthesis; dimethylallyl diphosphate from isopentenyl diphosphate: step 1/1. Catalyzes the 1,3-allylic rearrangement of the homoallylic substrate isopentenyl (IPP) to its highly electrophilic allylic isomer, dimethylallyl diphosphate (DMAPP). This chain is Isopentenyl-diphosphate Delta-isomerase, found in Clavibacter michiganensis subsp. michiganensis (strain NCPPB 382).